The chain runs to 159 residues: Small ribosomal subunit protein uS4 (159 aa).

The 53-residue stretch at 106-158 folds into the S4 RNA-binding domain; it reads RRLQTIVYRMGLAKSIYHARQLIVHGHIAIEGRRVTSPGFLVPRELEDKITLV.

It belongs to the universal ribosomal protein uS4 family. Part of the 30S ribosomal subunit. Contacts protein S5. The interaction surface between S4 and S5 is involved in control of translational fidelity.

In terms of biological role, one of the primary rRNA binding proteins, it binds directly to 16S rRNA where it nucleates assembly of the body of the 30S subunit. Its function is as follows. With S5 and S12 plays an important role in translational accuracy. The sequence is that of Small ribosomal subunit protein uS4 from Pyrobaculum arsenaticum (strain DSM 13514 / JCM 11321 / PZ6).